The chain runs to 347 residues: KIN17-like protein KLP (347 aa).

The Nuclear localization signal (NLS) signature appears at 222 to 225 (KRKR).

The protein belongs to the KIN17 family.

The protein resides in the cytoplasm. It is found in the nucleus. May act as repressor of root growth during copper excess and of hypocotyl growth in the dark. The polypeptide is KIN17-like protein KLP (Arabidopsis thaliana (Mouse-ear cress)).